We begin with the raw amino-acid sequence, 168 residues long: Large ribosomal subunit protein bL17 (168 aa).

The interval glutamine 124 to alanine 168 is disordered. Basic and acidic residues predominate over residues alanine 131–alanine 168.

This sequence belongs to the bacterial ribosomal protein bL17 family. As to quaternary structure, part of the 50S ribosomal subunit. Contacts protein L32.

The sequence is that of Large ribosomal subunit protein bL17 from Streptomyces coelicolor (strain ATCC BAA-471 / A3(2) / M145).